We begin with the raw amino-acid sequence, 169 residues long: Peptide methionine sulfoxide reductase MsrA (169 aa).

Cysteine 10 is a catalytic residue.

Belongs to the MsrA Met sulfoxide reductase family.

The catalysed reaction is L-methionyl-[protein] + [thioredoxin]-disulfide + H2O = L-methionyl-(S)-S-oxide-[protein] + [thioredoxin]-dithiol. It carries out the reaction [thioredoxin]-disulfide + L-methionine + H2O = L-methionine (S)-S-oxide + [thioredoxin]-dithiol. Has an important function as a repair enzyme for proteins that have been inactivated by oxidation. Catalyzes the reversible oxidation-reduction of methionine sulfoxide in proteins to methionine. The sequence is that of Peptide methionine sulfoxide reductase MsrA from Streptococcus equi subsp. equi (strain 4047).